Reading from the N-terminus, the 265-residue chain is Capsule polysaccharide export inner-membrane protein BexB (265 aa).

Transmembrane regions (helical) follow at residues 37–57, 64–84, 118–138, 151–171, 178–198, and 235–255; these read IGFF…VMMW, KFST…AMMW, LLEV…LVMI, LIAW…ICAI, FGKI…AFFF, and ESIG…LVMV. Residues 37-258 form the ABC transmembrane type-2 domain; the sequence is IGFFWLFVEP…LLGLVMVKNF (222 aa).

The protein belongs to the ABC-2 integral membrane protein family.

The protein resides in the cell inner membrane. Its function is as follows. May form an ATP-driven capsule polysaccharide export apparatus, in association with the BexA, BexC and BexD proteins. This Haemophilus influenzae protein is Capsule polysaccharide export inner-membrane protein BexB (bexB).